The chain runs to 50 residues: Basic phospholipase A2 Bmaj-9 (50 aa).

Y27, G29, and G31 together coordinate Ca(2+). Residues C28 and C45 are joined by a disulfide bond. H48 is a catalytic residue. D49 is a Ca(2+) binding site.

This sequence belongs to the phospholipase A2 family. Group II subfamily. D49 sub-subfamily. Requires Ca(2+) as cofactor. In terms of tissue distribution, expressed by the venom gland.

The protein localises to the secreted. The catalysed reaction is a 1,2-diacyl-sn-glycero-3-phosphocholine + H2O = a 1-acyl-sn-glycero-3-phosphocholine + a fatty acid + H(+). Snake venom phospholipase A2 (PLA2) that causes irreversible neuromuscular blockade in chick biventer cervicis muscle preparations. The neuromuscular blockade is mediated by inhibitory action at the presynaptic motor nerve endings. PLA2 catalyzes the calcium-dependent hydrolysis of the 2-acyl groups in 3-sn-phosphoglycerides. This is Basic phospholipase A2 Bmaj-9 from Bothrops marajoensis (Marajo lancehead).